A 183-amino-acid chain; its full sequence is Ubiquitin-conjugating enzyme E2 6 (183 aa).

A UBC core domain is found at Met-1–Lys-148. The active-site Glycyl thioester intermediate is Cys-85. Residues Lys-148 to Pro-183 form a disordered region. The segment covering Ile-152 to Glu-176 has biased composition (acidic residues).

This sequence belongs to the ubiquitin-conjugating enzyme family. As to expression, expressed in roots, petals, sepals and silique walls.

The catalysed reaction is S-ubiquitinyl-[E1 ubiquitin-activating enzyme]-L-cysteine + [E2 ubiquitin-conjugating enzyme]-L-cysteine = [E1 ubiquitin-activating enzyme]-L-cysteine + S-ubiquitinyl-[E2 ubiquitin-conjugating enzyme]-L-cysteine.. The protein operates within protein modification; protein ubiquitination. In terms of biological role, accepts the ubiquitin from the E1 complex and catalyzes its covalent attachment to other proteins. In Arabidopsis thaliana (Mouse-ear cress), this protein is Ubiquitin-conjugating enzyme E2 6 (UBC6).